We begin with the raw amino-acid sequence, 852 residues long: Ubiquitin carboxyl-terminal hydrolase 4 (852 aa).

Residues 172–296 enclose the Rhodanese domain; the sequence is ASGTVLLVDV…WSNAHPDFCV (125 aa). Positions 369-393 are disordered; sequence RSSSSSSNINERPGSVPPQLSNGST. The 362-residue stretch at 488 to 849 folds into the USP domain; that stretch reads VGLVNCGNSC…NAYVLFYHRI (362 aa). The active-site Nucleophile is C497. Catalysis depends on H806, which acts as the Proton acceptor.

This sequence belongs to the peptidase C19 family.

Its subcellular location is the cytoplasm. It localises to the late endosome membrane. It catalyses the reaction Thiol-dependent hydrolysis of ester, thioester, amide, peptide and isopeptide bonds formed by the C-terminal Gly of ubiquitin (a 76-residue protein attached to proteins as an intracellular targeting signal).. With respect to regulation, RFU1 is an inhibitor of deubiquitination activity. Functionally, ubiquitin thioesterase that acts at the late endosome/prevacuolar compartment to recover ubiquitin from ubiquitinated membrane proteins en route to the vacuole. Also removes ubiquitin from soluble proteins targeted to proteasomes. Is essential to maintain a normal level of free ubiquitin. Required for promoting coordination of DNA replication and avoids DNA overreplication. This is Ubiquitin carboxyl-terminal hydrolase 4 (DOA4) from Eremothecium gossypii (strain ATCC 10895 / CBS 109.51 / FGSC 9923 / NRRL Y-1056) (Yeast).